Reading from the N-terminus, the 215-residue chain is Large ribosomal subunit protein uL3 (215 aa).

N5-methylglutamine is present on glutamine 151.

Belongs to the universal ribosomal protein uL3 family. As to quaternary structure, part of the 50S ribosomal subunit. Forms a cluster with proteins L14 and L19. Post-translationally, methylated by PrmB.

One of the primary rRNA binding proteins, it binds directly near the 3'-end of the 23S rRNA, where it nucleates assembly of the 50S subunit. The chain is Large ribosomal subunit protein uL3 from Rickettsia bellii (strain OSU 85-389).